Reading from the N-terminus, the 601-residue chain is Glutathione-regulated potassium-efflux system protein KefB (601 aa).

13 helical membrane-spanning segments follow: residues 4 to 24 (SDFLLAGVLFLFAAVAAVPLA), 29 to 49 (IGAVLGYLLAGIAIGPWGLGF), 55 to 75 (EILHFSELGVVFLMFIIGLEL), 87 to 107 (IFGVGAAQVLLSAALLAGLLM), 115 to 135 (AAVVGGIGLAMSSTAMALQLM), 152 to 172 (VLLFQDLAVIPALALVPLLAG), 177 to 197 (HFDWMKIGMKVLAFVGMLIGG), 207 to 227 (FIAASGVREVFTAATLLLVLG), 230 to 250 (LFMDALGLSMALGTFIAGVLL), 262 to 282 (AIDPFKGLLLGLFFISVGMSL), 284 to 304 (LGVLYIHLLWVVISVVVLVAV), 324 to 344 (MQFAGVLSQGGEFAFVLFSTA), and 356 to 376 (ALLLVTVTLSMMTTPLLMKLV). The RCK N-terminal domain maps to 400 to 519 (KPQVIVVGFG…AGVTQFSRET (120 aa)).

Belongs to the monovalent cation:proton antiporter 2 (CPA2) transporter (TC 2.A.37) family. KefB subfamily. Interacts with the regulatory subunit KefG.

The protein localises to the cell inner membrane. In terms of biological role, pore-forming subunit of a potassium efflux system that confers protection against electrophiles. Catalyzes K(+)/H(+) antiport. This is Glutathione-regulated potassium-efflux system protein KefB from Shigella boydii serotype 18 (strain CDC 3083-94 / BS512).